Here is a 122-residue protein sequence, read N- to C-terminus: Small ribosomal subunit protein uS13 (122 aa).

The segment at 93–122 (RRGLPVRGQNTKTNARTRKGPKRTAGGKKK) is disordered. The segment covering 107–122 (ARTRKGPKRTAGGKKK) has biased composition (basic residues).

This sequence belongs to the universal ribosomal protein uS13 family. Part of the 30S ribosomal subunit. Forms a loose heterodimer with protein S19. Forms two bridges to the 50S subunit in the 70S ribosome.

Functionally, located at the top of the head of the 30S subunit, it contacts several helices of the 16S rRNA. In the 70S ribosome it contacts the 23S rRNA (bridge B1a) and protein L5 of the 50S subunit (bridge B1b), connecting the 2 subunits; these bridges are implicated in subunit movement. Contacts the tRNAs in the A and P-sites. This chain is Small ribosomal subunit protein uS13, found in Syntrophomonas wolfei subsp. wolfei (strain DSM 2245B / Goettingen).